The sequence spans 847 residues: Protein IRS1 (847 aa).

Disordered stretches follow at residues 1–82 (MAQR…NFWH), 607–627 (WLME…ATMP), and 715–847 (QVIP…HVHH). Residues 16 to 25 (RGRGAGGPSG) show a composition bias toward gly residues. Low complexity predominate over residues 26 to 56 (VGSSPPSSCVPMGATSTAGTGASAAPTATPG). Positions 723–733 (EPEDDDEDPTY) are enriched in acidic residues. Residues 833 to 847 (RPKKCQTHAPHHVHH) show a composition bias toward basic residues.

It belongs to the herpesviridae US22 family. In terms of assembly, interacts (via N-terminus) with the viral DNA polymerase accessory subunit UL44. Interacts (via C-terminus) with host EIF2AK2.

It is found in the virion. The protein resides in the host cytoplasm. The protein localises to the host nucleus. In terms of biological role, acts as a transactivator along with IE2, and is required for oriLyt-dependent DNA replication in the transient transfection replication assay using native promoters. This Human cytomegalovirus (strain Merlin) (HHV-5) protein is Protein IRS1 (IRS1).